We begin with the raw amino-acid sequence, 607 residues long: MGLTAQPVLDTAPTTNKRLLDWVAEVAELTQPESIYWVDGSEAENTRLTDELVAAGTLTRLNPELFPNSFAGFSDPKDVARVEEQTFICSEKEHDAGFTNNWMEPAEMRTKLSGLFKGSMRGRTMYVIPFVMGHLDAKSPKFGVEITDSAYVVASMRIMARIGTEVLRKIEEPDAFFVPAIHSLGAPLEPGQADVPWPCNDEKWIVHFPESREIWSYGSGYGGNALLGKKCYALRIASVMAHDEGWLAEHMLILKLTSPEQKTYYMAAAFPSACGKTNLALLDPTIKGWKVETLGDDITWMNFDDEGALRAVNPEAGLFGVAPGTGWDTNPNAMRAIAKGNSIFTNVALTDDGGVWWEGMTTETPSHLTDWRGNSWTPDSAEPAAHPNSRFCTPIDQIDMLAPEYNEPDGVPLSAILFGGRRKTTIPLVTQSRDWTNGIFMGSTLSSETTAAAAGAVGVVRRDPMAMLPFIGYDAGDYLKHWVELSKQGDQEKLPKIFLVNWFRRTADGGFAWPGFGDNSRVVTWAIERIEGKADAVETPIGFVPTKESLDLDGLDISDEQLSAALNVDALEWAAEAESIDEWYRRFGGSLPEELLGELEGLKERLG.

Substrate-binding positions include Arg81 and 221–223 (YGG). Residues Lys230 and His250 each contribute to the Mn(2+) site. Ser272 provides a ligand contact to substrate. 273 to 278 (ACGKTN) is a binding site for GTP. The active site involves Cys274. Position 297 (Asp297) interacts with Mn(2+). 388-390 (NSR) serves as a coordination point for substrate. Residues Arg390, Arg421, and 516 to 519 (FGDN) each bind GTP.

It belongs to the phosphoenolpyruvate carboxykinase [GTP] family. As to quaternary structure, monomer. Requires Mn(2+) as cofactor.

The protein localises to the cytoplasm. It catalyses the reaction oxaloacetate + GTP = phosphoenolpyruvate + GDP + CO2. It functions in the pathway carbohydrate biosynthesis; gluconeogenesis. Catalyzes the conversion of oxaloacetate (OAA) to phosphoenolpyruvate (PEP), the rate-limiting step in the metabolic pathway that produces glucose from lactate and other precursors derived from the citric acid cycle. This is Phosphoenolpyruvate carboxykinase [GTP] from Renibacterium salmoninarum (strain ATCC 33209 / DSM 20767 / JCM 11484 / NBRC 15589 / NCIMB 2235).